The primary structure comprises 269 residues: Energy-coupling factor transporter ATP-binding protein EcfA1 (269 aa).

The 235-residue stretch at I8–D242 folds into the ABC transporter domain. G42–S49 contributes to the ATP binding site.

This sequence belongs to the ABC transporter superfamily. Energy-coupling factor EcfA family. In terms of assembly, forms a stable energy-coupling factor (ECF) transporter complex composed of 2 membrane-embedded substrate-binding proteins (S component), 2 ATP-binding proteins (A component) and 2 transmembrane proteins (T component).

Its subcellular location is the cell membrane. In terms of biological role, ATP-binding (A) component of a common energy-coupling factor (ECF) ABC-transporter complex. Unlike classic ABC transporters this ECF transporter provides the energy necessary to transport a number of different substrates. The chain is Energy-coupling factor transporter ATP-binding protein EcfA1 from Staphylococcus epidermidis (strain ATCC 35984 / DSM 28319 / BCRC 17069 / CCUG 31568 / BM 3577 / RP62A).